The sequence spans 345 residues: Tetraacyldisaccharide 4'-kinase (345 aa).

51–58 contributes to the ATP binding site; the sequence is HVGGAGKT.

The protein belongs to the LpxK family.

It catalyses the reaction a lipid A disaccharide + ATP = a lipid IVA + ADP + H(+). The protein operates within glycolipid biosynthesis; lipid IV(A) biosynthesis; lipid IV(A) from (3R)-3-hydroxytetradecanoyl-[acyl-carrier-protein] and UDP-N-acetyl-alpha-D-glucosamine: step 6/6. Its function is as follows. Transfers the gamma-phosphate of ATP to the 4'-position of a tetraacyldisaccharide 1-phosphate intermediate (termed DS-1-P) to form tetraacyldisaccharide 1,4'-bis-phosphate (lipid IVA). In Bradyrhizobium sp. (strain BTAi1 / ATCC BAA-1182), this protein is Tetraacyldisaccharide 4'-kinase.